The following is a 447-amino-acid chain: Cysteine--tRNA ligase (447 aa).

Zn(2+) is bound at residue C28. The short motif at 30–40 is the 'HIGH' region element; that stretch reads PTVYNYIHVGN. Zn(2+) is bound by residues C211, H236, and E240. The 'KMSKS' region signature appears at 268–272; that stretch reads KMSKS. K271 contributes to the ATP binding site.

Belongs to the class-I aminoacyl-tRNA synthetase family. As to quaternary structure, monomer. Zn(2+) is required as a cofactor.

Its subcellular location is the cytoplasm. The enzyme catalyses tRNA(Cys) + L-cysteine + ATP = L-cysteinyl-tRNA(Cys) + AMP + diphosphate. The chain is Cysteine--tRNA ligase from Streptococcus mutans serotype c (strain ATCC 700610 / UA159).